The chain runs to 782 residues: Ribosome biogenesis protein ERB1 (782 aa).

Disordered regions lie at residues 1–123 and 339–361; these read MGSK…RIEK and PEEY…EDRE. Over residues 35 to 86 the composition is skewed to acidic residues; that stretch reads SEDEEDYLPSDDDDDVEDSENEGTGASEDDDDDDDDDDILSDDIPSDVDSEE. The segment covering 105 to 123 has biased composition (basic and acidic residues); sequence VDPKREEDDGADRNYRIEK. WD repeat units lie at residues 433–472, 476–516, 567–609, 612–650, 653–692, 696–736, and 752–782; these read GHEG…QVWS, NSEE…VTPA, TVRS…TQIP, KLSG…LVKV, PGAK…RPYK, FHGQ…DQLE, and VSKL…RLWM.

The protein belongs to the WD repeat BOP1/ERB1 family. In terms of assembly, component of the NOP7 complex, composed of ERB1, NOP7 and YTM1. The complex is held together by ERB1, which interacts with NOP7 via its N-terminal domain and with YTM1 via a high-affinity interaction between the seven-bladed beta-propeller domains of the 2 proteins. The NOP7 complex associates with the 66S pre-ribosome.

The protein localises to the nucleus. It is found in the nucleolus. It localises to the nucleoplasm. Its function is as follows. Component of the NOP7 complex, which is required for maturation of the 25S and 5.8S ribosomal RNAs and formation of the 60S ribosome. The chain is Ribosome biogenesis protein ERB1 from Chaetomium globosum (strain ATCC 6205 / CBS 148.51 / DSM 1962 / NBRC 6347 / NRRL 1970) (Soil fungus).